The sequence spans 130 residues: Phosphoribosyl-AMP cyclohydrolase (130 aa).

Asp77 is a binding site for Mg(2+). Cys78 contacts Zn(2+). 2 residues coordinate Mg(2+): Asp79 and Asp81. Residues Cys95 and Cys102 each contribute to the Zn(2+) site.

The protein belongs to the PRA-CH family. As to quaternary structure, homodimer. The cofactor is Mg(2+). It depends on Zn(2+) as a cofactor.

It is found in the cytoplasm. The catalysed reaction is 1-(5-phospho-beta-D-ribosyl)-5'-AMP + H2O = 1-(5-phospho-beta-D-ribosyl)-5-[(5-phospho-beta-D-ribosylamino)methylideneamino]imidazole-4-carboxamide. The protein operates within amino-acid biosynthesis; L-histidine biosynthesis; L-histidine from 5-phospho-alpha-D-ribose 1-diphosphate: step 3/9. Functionally, catalyzes the hydrolysis of the adenine ring of phosphoribosyl-AMP. In Pseudomonas entomophila (strain L48), this protein is Phosphoribosyl-AMP cyclohydrolase.